The chain runs to 83 residues: Sulfur carrier protein TusA (83 aa).

Cysteine 20 acts as the Cysteine persulfide intermediate in catalysis.

Belongs to the sulfur carrier protein TusA family.

The protein resides in the cytoplasm. In terms of biological role, sulfur carrier protein which probably makes part of a sulfur-relay system. The protein is Sulfur carrier protein TusA of Pseudomonas fluorescens (strain SBW25).